The following is a 430-amino-acid chain: Adenylosuccinate synthetase (430 aa).

Residues 12-18 (GDEGKGK) and 40-42 (GHT) contribute to the GTP site. Catalysis depends on Asp-13, which acts as the Proton acceptor. Mg(2+) contacts are provided by Asp-13 and Gly-40. Residues 13 to 16 (DEGK), 38 to 41 (NAGH), Thr-128, Arg-142, Gln-223, Thr-238, and Arg-302 contribute to the IMP site. His-41 serves as the catalytic Proton donor. 298–304 (TTTGRPR) provides a ligand contact to substrate. GTP contacts are provided by residues Arg-304, 330–332 (CID), and 412–414 (SVG).

Belongs to the adenylosuccinate synthetase family. As to quaternary structure, homodimer. Mg(2+) serves as cofactor.

Its subcellular location is the cytoplasm. The catalysed reaction is IMP + L-aspartate + GTP = N(6)-(1,2-dicarboxyethyl)-AMP + GDP + phosphate + 2 H(+). The protein operates within purine metabolism; AMP biosynthesis via de novo pathway; AMP from IMP: step 1/2. In terms of biological role, plays an important role in the de novo pathway of purine nucleotide biosynthesis. Catalyzes the first committed step in the biosynthesis of AMP from IMP. This is Adenylosuccinate synthetase from Streptococcus thermophilus (strain CNRZ 1066).